The chain runs to 165 residues: Cytochrome c-type biogenesis protein CcmE (165 aa).

At 1–29 the chain is on the cytoplasmic side; sequence MSATAEQNARNPKGKGGFARTVSQRKRKR. The helical; Signal-anchor for type II membrane protein transmembrane segment at 30-50 threads the bilayer; it reads LFLIGGALAVLAVAVGLMLTA. Over 51-165 the chain is Periplasmic; the sequence is FNQDIRFFRT…LKKKGVWEGK (115 aa). Heme is bound by residues H143 and Y147.

Belongs to the CcmE/CycJ family.

The protein localises to the cell inner membrane. Heme chaperone required for the biogenesis of c-type cytochromes. Transiently binds heme delivered by CcmC and transfers the heme to apo-cytochromes in a process facilitated by CcmF and CcmH. The chain is Cytochrome c-type biogenesis protein CcmE from Brucella abortus (strain S19).